A 282-amino-acid chain; its full sequence is U1 small nuclear ribonucleoprotein A (282 aa).

At A2 the chain carries N-acetylalanine. One can recognise an RRM 1 domain in the interval 10–89 (HTIYINNLNE…KPMRIQYAKT (80 aa)). The residue at position 60 (K60) is an N6-acetyllysine. The disordered stretch occupies residues 100-132 (TFVERDRKREKRKPKSQETPATKKAVQGGGATP). The residue at position 131 (T131) is a Phosphothreonine. R152 is modified (omega-N-methylarginine). An RRM 2 domain is found at 208–282 (HILFLTNLPE…NAMKISFAKK (75 aa)).

Belongs to the RRM U1 A/B'' family. In terms of assembly, U1 snRNP is composed of the 7 core Sm proteins SNRPB, SNRPD1, SNRPD2, SNRPD3, SNRPE, SNRPF and SNRPG that assemble in a heptameric protein ring on the Sm site of the small nuclear RNA to form the core snRNP, and at least three U1 snRNP-specific proteins SNRNP70/U1-70K, SNRPA/U1-A and SNRPC/U1-C. Interacts with SFPQ; component of a snRNP-free complex with SFPQ. Interacts with IVNS1ABP (via BACK domain); the interaction is indirect.

The protein localises to the nucleus. In terms of biological role, component of the spliceosomal U1 snRNP, which is essential for recognition of the pre-mRNA 5' splice-site and the subsequent assembly of the spliceosome. U1 snRNP is the first snRNP to interact with pre-mRNA. This interaction is required for the subsequent binding of U2 snRNP and the U4/U6/U5 tri-snRNP. SNRPA binds stem loop II of U1 snRNA. In a snRNP-free form (SF-A) may be involved in coupled pre-mRNA splicing and polyadenylation process. May bind preferentially to the 5'-UGCAC-3' motif on RNAs. This Homo sapiens (Human) protein is U1 small nuclear ribonucleoprotein A (SNRPA).